Consider the following 151-residue polypeptide: Ribosome maturation factor RimP (151 aa).

This sequence belongs to the RimP family.

It is found in the cytoplasm. Functionally, required for maturation of 30S ribosomal subunits. This is Ribosome maturation factor RimP from Shewanella piezotolerans (strain WP3 / JCM 13877).